The chain runs to 363 residues: Anhydro-N-acetylmuramic acid kinase (363 aa).

Residue Gly-9–Asp-16 participates in ATP binding.

Belongs to the anhydro-N-acetylmuramic acid kinase family.

The enzyme catalyses 1,6-anhydro-N-acetyl-beta-muramate + ATP + H2O = N-acetyl-D-muramate 6-phosphate + ADP + H(+). The protein operates within amino-sugar metabolism; 1,6-anhydro-N-acetylmuramate degradation. It participates in cell wall biogenesis; peptidoglycan recycling. Its function is as follows. Catalyzes the specific phosphorylation of 1,6-anhydro-N-acetylmuramic acid (anhMurNAc) with the simultaneous cleavage of the 1,6-anhydro ring, generating MurNAc-6-P. Is required for the utilization of anhMurNAc either imported from the medium or derived from its own cell wall murein, and thus plays a role in cell wall recycling. The sequence is that of Anhydro-N-acetylmuramic acid kinase from Nitrosomonas europaea (strain ATCC 19718 / CIP 103999 / KCTC 2705 / NBRC 14298).